The primary structure comprises 113 residues: Nucleoid-associated protein FMG_0513 (113 aa).

Residues 1 to 44 are disordered; the sequence is MGNKFRGGMPGMGNMGNMMKQMQKMQRQMEETQKRLEETEVTAT. Residues 15–26 show a composition bias toward low complexity; it reads MGNMMKQMQKMQ. Residues 27–38 show a composition bias toward basic and acidic residues; the sequence is RQMEETQKRLEE.

Belongs to the YbaB/EbfC family. Homodimer.

The protein resides in the cytoplasm. Its subcellular location is the nucleoid. Functionally, binds to DNA and alters its conformation. May be involved in regulation of gene expression, nucleoid organization and DNA protection. The protein is Nucleoid-associated protein FMG_0513 of Finegoldia magna (strain ATCC 29328 / DSM 20472 / WAL 2508) (Peptostreptococcus magnus).